The sequence spans 157 residues: MSQVILDLQLACENHAGLPDEAQFQRWLDGVIPQFQEEAEVTIRLVDEAESHDLNLTYRGKDKPTNVLSFPFEAPPGIEMPLLGDLIICRQVVEQEAQEQSKPLEAHWAHMVVHGSLHLLGYDHIDDDEAEEMESLETEIMLAMGYEDPYIAEKIAE.

Positions 114, 118, and 124 each coordinate Zn(2+).

Belongs to the endoribonuclease YbeY family. Zn(2+) is required as a cofactor.

The protein resides in the cytoplasm. Single strand-specific metallo-endoribonuclease involved in late-stage 70S ribosome quality control and in maturation of the 3' terminus of the 16S rRNA. The chain is Endoribonuclease YbeY from Salmonella agona (strain SL483).